We begin with the raw amino-acid sequence, 422 residues long: Lipoyl synthase, mitochondrial (422 aa).

A mitochondrion-targeting transit peptide spans 1–34; it reads MAASSTRLRCLYASSAPAWKKSPSQSIISLSRHY. Residues 37–48 show a composition bias toward polar residues; sequence TSSTTPSLNPDE. A disordered region spans residues 37–70; it reads TSSTTPSLNPDESSSSSSSTIPKRRKTTTFRDKL. 7 residues coordinate [4Fe-4S] cluster: Cys-146, Cys-151, Cys-157, Cys-177, Cys-181, Cys-184, and Ser-383. In terms of domain architecture, Radical SAM core spans 160 to 372; it reads GSDKSAATAT…RQRALEMGFL (213 aa).

Belongs to the radical SAM superfamily. Lipoyl synthase family. It depends on [4Fe-4S] cluster as a cofactor.

The protein resides in the mitochondrion. It carries out the reaction [[Fe-S] cluster scaffold protein carrying a second [4Fe-4S](2+) cluster] + N(6)-octanoyl-L-lysyl-[protein] + 2 oxidized [2Fe-2S]-[ferredoxin] + 2 S-adenosyl-L-methionine + 4 H(+) = [[Fe-S] cluster scaffold protein] + N(6)-[(R)-dihydrolipoyl]-L-lysyl-[protein] + 4 Fe(3+) + 2 hydrogen sulfide + 2 5'-deoxyadenosine + 2 L-methionine + 2 reduced [2Fe-2S]-[ferredoxin]. It participates in protein modification; protein lipoylation via endogenous pathway; protein N(6)-(lipoyl)lysine from octanoyl-[acyl-carrier-protein]: step 2/2. Its function is as follows. Catalyzes the radical-mediated insertion of two sulfur atoms into the C-6 and C-8 positions of the octanoyl moiety bound to the lipoyl domains of lipoate-dependent enzymes, thereby converting the octanoylated domains into lipoylated derivatives. In Talaromyces stipitatus (strain ATCC 10500 / CBS 375.48 / QM 6759 / NRRL 1006) (Penicillium stipitatum), this protein is Lipoyl synthase, mitochondrial.